A 778-amino-acid polypeptide reads, in one-letter code: Kin of IRRE-like protein 3 (778 aa).

The first 21 residues, 1-21, serve as a signal peptide directing secretion; that stretch reads MRPFQLDLLFLCFFLFSQELG. The Extracellular segment spans residues 22–535; that stretch reads LQKRGCCLVL…GLEAESVPMA (514 aa). Ig-like C2-type domains are found at residues 48–142, 147–243, 249–330, 335–415, and 419–515; these read YSFS…ARLT, PDDP…TSVT, PPLV…RTVD, PRMT…VTLT, and PPII…IRLK. Residues Cys69 and Cys127 are joined by a disulfide bond. Asn167 carries N-linked (GlcNAc...) asparagine glycosylation. An intrachain disulfide couples Cys170 to Cys227. A glycan (N-linked (GlcNAc...) asparagine) is linked at Asn253. The cysteines at positions 271 and 314 are disulfide-linked. Residue Asn324 is glycosylated (N-linked (GlcNAc...) asparagine). Disulfide bonds link Cys356–Cys398 and Cys440–Cys499. Residue Asn498 is glycosylated (N-linked (GlcNAc...) asparagine). Residues 536–556 traverse the membrane as a helical segment; it reads VIIGVAVGAGVAFLVLMATIV. At 557–778 the chain is on the cytoplasmic side; that stretch reads AFCCARSQRN…PLQRRMQTHV (222 aa). Residues 727–736 show a composition bias toward polar residues; that stretch reads CDSSVSSSGK. The disordered stretch occupies residues 727–778; that stretch reads CDSSVSSSGKQDGYVQFDKASKASASSSHHSQSSSQNSDPSRPLQRRMQTHV. A compositionally biased stretch (low complexity) spans 748-762; it reads KASASSSHHSQSSSQ.

This sequence belongs to the immunoglobulin superfamily. In terms of assembly, homodimer; mediates homophilic interactions to promote cell adhesion. Interacts with NPHS1; forms heterodimers with NPHS1. Interacts with NPHS2/podocin (via the C-terminus). Interacts with CASK. Interacts (via extracellular region) with MAP1B. Interacts (via extracellular region) with MYO16. Interacts (via intracellular region) with ATP1B1. Interacts (via intracellular region) with SHMT2. Interacts (via intracellular region) with UFC1. Post-translationally, undergoes proteolysis by a metalloprotease and gives rise to a soluble form. Expressed mainly in adult brain, bone marrow and stromal cells. Expressed in diverse regions of the brain, including the cortex, hippocampus, striatum, olfactory bulb and cerebellum. In brain, expressed in pontine nucleus neurons (at protein level). In hippocampus, produced in both the dentate granule neurons and the GABAergic neurons, but not the CA3 neurons. Expressed in subpopulations of vomeronasal sensory neurons. Expressed in a subset of neurons in dorsal root ganglia.

It is found in the cell membrane. Its subcellular location is the cell projection. The protein localises to the axon. The protein resides in the dendrite. It localises to the secreted. Its function is as follows. Synaptic adhesion molecule required for the formation of target-specific synapses. Required for formation of target-specific synapses at hippocampal mossy fiber synapses. Required for formation of mossy fiber filopodia, the synaptic structures connecting dentate granule and GABA neurons. Probably acts as a homophilic adhesion molecule that promotes trans-cellular interactions and stabilize mossy fiber filipodia contact and subsequent synapse formation. Required for the coalescence of vomeronasal sensory neuron axons. May be involved in the hematopoietic supportive capacity of stroma cells; the secreted extracellular domain is directly responsible for supporting hematopoietic stem cells. In Mus musculus (Mouse), this protein is Kin of IRRE-like protein 3 (Kirrel3).